A 104-amino-acid chain; its full sequence is Membrane magnesium transporter (104 aa).

Residues 1 to 2 lie on the Cytoplasmic side of the membrane; it reads MN. The chain crosses the membrane as a helical span at residues 3 to 23; the sequence is LGFLVGVFGVLILSHAAYSTI. Topologically, residues 24 to 40 are lumenal; sequence QYRGLLKIMEEEFSRPP. The chain crosses the membrane as a helical span at residues 41-61; the sequence is INVILELIIGLALCMWAALTF. Residues 62–104 lie on the Cytoplasmic side of the membrane; that stretch reads PGKFLSIHPDSDENRAVFLPDNSDFMIFNHRGRLFPPQIDMKF.

This sequence belongs to the membrane magnesium transporter (TC 1.A.67) family. In terms of assembly, component of the ER membrane protein complex (EMC).

It is found in the endoplasmic reticulum membrane. Its subcellular location is the golgi apparatus membrane. It localises to the early endosome membrane. Mediates Mg(2+) transport. This Arabidopsis thaliana (Mouse-ear cress) protein is Membrane magnesium transporter.